The sequence spans 462 residues: CD-NTase-associated protein 4 (462 aa).

The tract at residues 1 to 226 is N-terminal endonuclease domain; it reads MSASLLEKQS…FENFICHALE (226 aa). Catalysis depends on residues Asp-50, Glu-67, and Lys-69. Asp-50 provides a ligand contact to Mg(2+). The segment at 235-462 is C-terminal SAVED domain; that stretch reads DPIKINLSAS…QYIPTAELNL (228 aa). 2',3',3'-c-tri-AMP contacts are provided by residues 299-301, Trp-449, and Tyr-454; that span reads KQR.

This sequence belongs to the Cap4 nuclease family. As to quaternary structure, a monomer in the absence of ligand, in its presence it forms oligomers. It depends on a divalent metal cation as a cofactor.

Its activity is regulated as follows. DNase activity is activated upon ligand binding. Inhibited by EDTA. In terms of biological role, effector DNase of a CBASS antivirus system. CBASS (cyclic oligonucleotide-based antiphage signaling system) provides immunity against bacteriophage. The CD-NTase protein synthesizes cyclic nucleotides in response to infection; these serve as specific second messenger signals. The signals activate a diverse range of effectors, leading to bacterial cell death and thus abortive phage infection. A type II-C(AAAA) CBASS system. Its function is as follows. Binds cyclic nucleotide second messengers (synthesized by CdnD, the cognate CD-NTase in the CBASS operon). Ligand binding activates it to endonucleolytically degrade dsDNA to approximately 6 bp length fragments, with a preference for 5'-C or 5'-G cleavage site. The minor product of CdnD is the activating nucleotide; also binds the major product (2',3',3'-cyclic AMP-AMP-AMP) but is not activated by it. Only binds DNA in the presence of ligand. Is not activated by c-di-AMP, c-di-GMP, 3'3'-cyclic GMP-AMP (3'3'-cGAMP) or 3',3',3'-cyclic AMP-AMP-GMP. The polypeptide is CD-NTase-associated protein 4 (Acinetobacter sp. (strain ATCC 27244 / 9458)).